The primary structure comprises 358 residues: PDZ and LIM domain protein 3 (358 aa).

One can recognise a PDZ domain in the interval 1-84; the sequence is MPQNVLLPGP…QLCLKIDRAE (84 aa). Disordered regions lie at residues 126–155 and 237–274; these read FILP…SVST and DTEH…RAPV. Positions 129–146 are enriched in low complexity; sequence PGRSSGSSTPSGFDPGSG. The LIM zinc-binding domain maps to 288 to 347; the sequence is PICDRCGNGIVGTVVKAKDKLRHPDCFVCSDCNLNLKQKGYFFVEGQLYCEAHARARMRP.

Its subcellular location is the cytoplasm. It is found in the myofibril. It localises to the sarcomere. The protein localises to the z line. In terms of biological role, may play a role in the organization of actin filament arrays within muscle cells. In Xenopus laevis (African clawed frog), this protein is PDZ and LIM domain protein 3 (pdlim3).